The primary structure comprises 260 residues: Cystine transporter (260 aa).

In terms of domain architecture, PQ-loop 1 spans methionine 1 to aspartate 67. 5 helical membrane passes run isoleucine 7–tryptophan 28, phenylalanine 40–tryptophan 62, phenylalanine 81–alanine 102, tryptophan 118–methionine 138, and threonine 151–threonine 175. Residues lysine 162–aspartate 212 enclose the PQ-loop 2 domain. Asparagine 177 carries an N-linked (GlcNAc...) asparagine glycan. Transmembrane regions (helical) follow at residues cysteine 185–leucine 205 and valine 227–tyrosine 247.

This sequence belongs to the cystinosin family.

The protein resides in the endosome membrane. Its subcellular location is the vacuole membrane. The enzyme catalyses L-cystine(out) + H(+)(out) = L-cystine(in) + H(+)(in). In terms of biological role, cystine/H(+) symporter that mediates export of cystine, the oxidized dimer of cysteine, from vacuoles/endodomes. The polypeptide is Cystine transporter (ERS1) (Saccharomyces cerevisiae (strain ATCC 204508 / S288c) (Baker's yeast)).